A 185-amino-acid polypeptide reads, in one-letter code: Elongation factor P (185 aa).

Belongs to the elongation factor P family.

It localises to the cytoplasm. The protein operates within protein biosynthesis; polypeptide chain elongation. Its function is as follows. Involved in peptide bond synthesis. Stimulates efficient translation and peptide-bond synthesis on native or reconstituted 70S ribosomes in vitro. Probably functions indirectly by altering the affinity of the ribosome for aminoacyl-tRNA, thus increasing their reactivity as acceptors for peptidyl transferase. The sequence is that of Elongation factor P from Finegoldia magna (strain ATCC 29328 / DSM 20472 / WAL 2508) (Peptostreptococcus magnus).